The primary structure comprises 276 residues: MLADIWYPNWWQALVLGMVQGITEFLPISSTAHLRVFPALLGWPDAGASFAAVIQLGSLGAVLIYFASDLRQLLLGSWKAWQKRDFQEESWRLLMGILVGTLPIVIAGWAVKAIWGSPPRQLWVVAAAAIGLALALGWAERVGKRRRDLHSLGIGDGLWVGLAQALALIPGVSRSGVTLTAALLLDLQRSAAARYSFLLGIPALFLAGVAEFIAEFRAEALLSQGLGTLSAFVFSYGSIDWLIRFLQRSSTWVFIVYRIGFGLFIFLGLALGFLQP.

7 consecutive transmembrane segments (helical) span residues 46–66 (AGAS…LIYF), 94–114 (LMGI…VKAI), 122–142 (LWVV…AERV), 152–172 (LGIG…IPGV), 196–216 (SFLL…IAEF), 226–246 (LGTL…IRFL), and 253–273 (VFIV…ALGF).

This sequence belongs to the UppP family.

It localises to the cell inner membrane. The catalysed reaction is di-trans,octa-cis-undecaprenyl diphosphate + H2O = di-trans,octa-cis-undecaprenyl phosphate + phosphate + H(+). In terms of biological role, catalyzes the dephosphorylation of undecaprenyl diphosphate (UPP). Confers resistance to bacitracin. This Synechococcus sp. (strain JA-3-3Ab) (Cyanobacteria bacterium Yellowstone A-Prime) protein is Undecaprenyl-diphosphatase.